A 276-amino-acid chain; its full sequence is Bifunctional protein FolD (276 aa).

NADP(+) is bound by residues 158–160, serine 183, and isoleucine 224; that span reads NRS.

Belongs to the tetrahydrofolate dehydrogenase/cyclohydrolase family. Homodimer.

The catalysed reaction is (6R)-5,10-methylene-5,6,7,8-tetrahydrofolate + NADP(+) = (6R)-5,10-methenyltetrahydrofolate + NADPH. It catalyses the reaction (6R)-5,10-methenyltetrahydrofolate + H2O = (6R)-10-formyltetrahydrofolate + H(+). It functions in the pathway one-carbon metabolism; tetrahydrofolate interconversion. In terms of biological role, catalyzes the oxidation of 5,10-methylenetetrahydrofolate to 5,10-methenyltetrahydrofolate and then the hydrolysis of 5,10-methenyltetrahydrofolate to 10-formyltetrahydrofolate. This chain is Bifunctional protein FolD, found in Picrophilus torridus (strain ATCC 700027 / DSM 9790 / JCM 10055 / NBRC 100828 / KAW 2/3).